A 214-amino-acid polypeptide reads, in one-letter code: UPF0111 protein MJ0629 (214 aa).

It belongs to the UPF0111 family.

In Methanocaldococcus jannaschii (strain ATCC 43067 / DSM 2661 / JAL-1 / JCM 10045 / NBRC 100440) (Methanococcus jannaschii), this protein is UPF0111 protein MJ0629.